Here is a 990-residue protein sequence, read N- to C-terminus: Importin beta-like protein kap111 (990 aa).

The protein belongs to the importin beta family.

The protein resides in the nucleus. Functions as a component of the nuclear pore complex (NPC). NPC components, collectively referred to as nucleoporins (NUPs), can play the role of both NPC structural components and of docking or interaction partners for transiently associated nuclear transport factors. Active directional transport is assured by both, a Phe-Gly (FG) repeat affinity gradient for these transport factors across the NPC and a transport cofactor concentration gradient across the nuclear envelope. This Schizosaccharomyces pombe (strain 972 / ATCC 24843) (Fission yeast) protein is Importin beta-like protein kap111 (kap111).